Here is a 361-residue protein sequence, read N- to C-terminus: Tegument protein UL51 homolog (361 aa).

Cys-8 carries S-palmitoyl cysteine; by host lipidation. The segment at 251-299 is disordered; the sequence is GDEEDEVTVMSPSPEPVQQQPPVEPVQQQPQGRGSHRRRYKESAPQETL. Residues 266–281 are compositionally biased toward low complexity; it reads PVQQQPPVEPVQQQPQ.

The protein belongs to the herpesviridae UL51 family. As to quaternary structure, oligomerizes. Interacts with UL103; this interaction mediates UL103 incorporation to virions. Post-translationally, phosphorylated. Palmitoylation is necessary for Golgi localization.

It is found in the virion tegument. It localises to the host cytoplasm. The protein resides in the host Golgi apparatus. Functionally, plays several roles during the time course of infection, including egress of virus particles from the perinuclear space and secondary envelopment of cytoplasmic capsids that bud into specific trans-Golgi network (TGN)-derived membranes. This is Tegument protein UL51 homolog (UL71) from Homo sapiens (Human).